We begin with the raw amino-acid sequence, 87 residues long: U3-theraphotoxin-Hhn1a 8 (87 aa).

The N-terminal stretch at 1–24 (MVNMKASMFLTFAGLVLLFVVCYA) is a signal peptide. A propeptide spanning residues 25-52 (SGSEEKEFPKEMLSSIFAVDNDFKQEER) is cleaved from the precursor. Cystine bridges form between C54-C67, C61-C72, and C66-C79.

Belongs to the neurotoxin 10 (Hwtx-1) family. 51 (Hntx-8) subfamily. Hntx-8 sub-subfamily. In terms of tissue distribution, expressed by the venom gland.

Its subcellular location is the secreted. Functionally, ion channel inhibitor. This Cyriopagopus hainanus (Chinese bird spider) protein is U3-theraphotoxin-Hhn1a 8.